Reading from the N-terminus, the 313-residue chain is DNA-directed RNA polymerase subunit alpha (313 aa).

Residues 1–227 (MMLDVAPPRF…DFFGLFAEGY (227 aa)) are alpha N-terminal domain (alpha-NTD). Positions 242–313 (RPVITDERPI…YGYTLESGRE (72 aa)) are alpha C-terminal domain (alpha-CTD).

This sequence belongs to the RNA polymerase alpha chain family. As to quaternary structure, homodimer. The RNAP catalytic core consists of 2 alpha, 1 beta, 1 beta' and 1 omega subunit. When a sigma factor is associated with the core the holoenzyme is formed, which can initiate transcription.

It carries out the reaction RNA(n) + a ribonucleoside 5'-triphosphate = RNA(n+1) + diphosphate. Functionally, DNA-dependent RNA polymerase catalyzes the transcription of DNA into RNA using the four ribonucleoside triphosphates as substrates. The polypeptide is DNA-directed RNA polymerase subunit alpha (Rubrobacter xylanophilus (strain DSM 9941 / JCM 11954 / NBRC 16129 / PRD-1)).